The primary structure comprises 111 residues: uncharacterized protein (111 aa).

The next 3 membrane-spanning stretches (helical) occupy residues 22–42, 48–68, and 75–95; these read ASLI…ANIT, LTPA…VSVL, and VLVT…PKIL.

It is found in the membrane. This is an uncharacterized protein from Saccharomyces cerevisiae (strain ATCC 204508 / S288c) (Baker's yeast).